The sequence spans 232 residues: Ubiquinone biosynthesis O-methyltransferase (232 aa).

Residues R36, G55, D76, and L120 each contribute to the S-adenosyl-L-methionine site.

Belongs to the methyltransferase superfamily. UbiG/COQ3 family.

The enzyme catalyses a 3-demethylubiquinol + S-adenosyl-L-methionine = a ubiquinol + S-adenosyl-L-homocysteine + H(+). It catalyses the reaction a 3-(all-trans-polyprenyl)benzene-1,2-diol + S-adenosyl-L-methionine = a 2-methoxy-6-(all-trans-polyprenyl)phenol + S-adenosyl-L-homocysteine + H(+). The protein operates within cofactor biosynthesis; ubiquinone biosynthesis. Its function is as follows. O-methyltransferase that catalyzes the 2 O-methylation steps in the ubiquinone biosynthetic pathway. The chain is Ubiquinone biosynthesis O-methyltransferase from Pseudomonas entomophila (strain L48).